A 70-amino-acid chain; its full sequence is MARVTVEDCLDKVENRFLLVMLASKRVKQLYKGARPLVDPKNNRLVVTSLREIAAGKVGYEMIKRQRTQQ.

The protein belongs to the RNA polymerase subunit omega family. As to quaternary structure, the RNAP catalytic core consists of 2 alpha, 1 beta, 1 beta' and 1 omega subunit. When a sigma factor is associated with the core the holoenzyme is formed, which can initiate transcription.

It carries out the reaction RNA(n) + a ribonucleoside 5'-triphosphate = RNA(n+1) + diphosphate. Its function is as follows. Promotes RNA polymerase assembly. Latches the N- and C-terminal regions of the beta' subunit thereby facilitating its interaction with the beta and alpha subunits. The sequence is that of DNA-directed RNA polymerase subunit omega from Pelobacter propionicus (strain DSM 2379 / NBRC 103807 / OttBd1).